The chain runs to 171 residues: 3-hydroxydecanoyl-[acyl-carrier-protein] dehydratase (171 aa).

His70 is an active-site residue.

The protein belongs to the thioester dehydratase family. FabA subfamily. Homodimer.

The protein localises to the cytoplasm. The enzyme catalyses a (3R)-hydroxyacyl-[ACP] = a (2E)-enoyl-[ACP] + H2O. It catalyses the reaction (3R)-hydroxydecanoyl-[ACP] = (2E)-decenoyl-[ACP] + H2O. The catalysed reaction is (2E)-decenoyl-[ACP] = (3Z)-decenoyl-[ACP]. It participates in lipid metabolism; fatty acid biosynthesis. In terms of biological role, necessary for the introduction of cis unsaturation into fatty acids. Catalyzes the dehydration of (3R)-3-hydroxydecanoyl-ACP to E-(2)-decenoyl-ACP and then its isomerization to Z-(3)-decenoyl-ACP. Can catalyze the dehydratase reaction for beta-hydroxyacyl-ACPs with saturated chain lengths up to 16:0, being most active on intermediate chain length. This Pseudomonas fluorescens (strain Pf0-1) protein is 3-hydroxydecanoyl-[acyl-carrier-protein] dehydratase.